A 274-amino-acid chain; its full sequence is 3-methyl-2-oxobutanoate hydroxymethyltransferase (274 aa).

D49 and D88 together coordinate Mg(2+). Residues 49 to 50 (DS), D88, and K118 contribute to the 3-methyl-2-oxobutanoate site. E120 is a Mg(2+) binding site. The Proton acceptor role is filled by E187.

Belongs to the PanB family. Homodecamer; pentamer of dimers. Requires Mg(2+) as cofactor.

The protein resides in the cytoplasm. It carries out the reaction 3-methyl-2-oxobutanoate + (6R)-5,10-methylene-5,6,7,8-tetrahydrofolate + H2O = 2-dehydropantoate + (6S)-5,6,7,8-tetrahydrofolate. It functions in the pathway cofactor biosynthesis; (R)-pantothenate biosynthesis; (R)-pantoate from 3-methyl-2-oxobutanoate: step 1/2. In terms of biological role, catalyzes the reversible reaction in which hydroxymethyl group from 5,10-methylenetetrahydrofolate is transferred onto alpha-ketoisovalerate to form ketopantoate. This Paramagnetospirillum magneticum (strain ATCC 700264 / AMB-1) (Magnetospirillum magneticum) protein is 3-methyl-2-oxobutanoate hydroxymethyltransferase.